The sequence spans 200 residues: RNA polymerase I-specific transcription initiation factor rrn11 (200 aa).

It localises to the nucleus. Functionally, subunit of a multiprotein complex essential for the initiation of rDNA transcription by RNA polymerase I. Binding to the DNA template is dependent on the initial binding of other factors. The chain is RNA polymerase I-specific transcription initiation factor rrn11 (rrn11) from Schizosaccharomyces pombe (strain 972 / ATCC 24843) (Fission yeast).